We begin with the raw amino-acid sequence, 197 residues long: Isopentenyl-diphosphate Delta-isomerase (197 aa).

Histidine 41 and histidine 48 together coordinate Mn(2+). The Nudix hydrolase domain maps to 46–183; the sequence is RLHRAFSVFL…AWFMTVLDAA (138 aa). Cysteine 83 is a catalytic residue. Position 83 (cysteine 83) interacts with Mg(2+). Histidine 85 provides a ligand contact to Mn(2+). Glutamate 103 provides a ligand contact to Mg(2+). 2 residues coordinate Mn(2+): glutamate 130 and glutamate 132. Glutamate 132 is an active-site residue.

It belongs to the IPP isomerase type 1 family. The cofactor is Mg(2+). Mn(2+) is required as a cofactor.

It localises to the cytoplasm. The enzyme catalyses isopentenyl diphosphate = dimethylallyl diphosphate. It functions in the pathway isoprenoid biosynthesis; dimethylallyl diphosphate biosynthesis; dimethylallyl diphosphate from isopentenyl diphosphate: step 1/1. Functionally, catalyzes the 1,3-allylic rearrangement of the homoallylic substrate isopentenyl (IPP) to its highly electrophilic allylic isomer, dimethylallyl diphosphate (DMAPP). This Streptomyces coelicolor (strain ATCC BAA-471 / A3(2) / M145) protein is Isopentenyl-diphosphate Delta-isomerase.